The following is a 182-amino-acid chain: Probable peptidyl-prolyl cis-trans isomerase A (182 aa).

A PPIase cyclophilin-type domain is found at glutamine 13–isoleucine 181. Residues threonine 161–serine 182 form a disordered region.

This sequence belongs to the cyclophilin-type PPIase family.

Its subcellular location is the cytoplasm. The enzyme catalyses [protein]-peptidylproline (omega=180) = [protein]-peptidylproline (omega=0). PPIases accelerate the folding of proteins. It catalyzes the cis-trans isomerization of proline imidic peptide bonds in oligopeptides. This Mycobacterium leprae (strain TN) protein is Probable peptidyl-prolyl cis-trans isomerase A (ppiA).